A 366-amino-acid polypeptide reads, in one-letter code: Phospho-N-acetylmuramoyl-pentapeptide-transferase (366 aa).

Helical transmembrane passes span 3 to 23 (QIIIAGAVGLLVSIFVTPVLI), 52 to 72 (MGGIAILIGITVAYAVTGIVG), 80 to 100 (LTASGLLVLGLTLALGGLGFA), 120 to 140 (LIGQLAISLIFGALILLFPNA), 161 to 181 (LAIGPKAVGIAIFLLFIYILI), 197 to 217 (LAAGSTAIVMGTYTVITFWQF), 238 to 258 (LAILAAAGLGACLGFLWWNAA), 262 to 282 (IFMGDTGSLALGGLVAGLSVA), 287 to 307 (LLMIIVGALFVLEAASVVIQV), and 341 to 361 (FWLIAAVAALIGASIFYGEWL).

The protein belongs to the glycosyltransferase 4 family. MraY subfamily. Mg(2+) serves as cofactor.

It is found in the cell membrane. The catalysed reaction is UDP-N-acetyl-alpha-D-muramoyl-L-alanyl-gamma-D-glutamyl-meso-2,6-diaminopimeloyl-D-alanyl-D-alanine + di-trans,octa-cis-undecaprenyl phosphate = di-trans,octa-cis-undecaprenyl diphospho-N-acetyl-alpha-D-muramoyl-L-alanyl-D-glutamyl-meso-2,6-diaminopimeloyl-D-alanyl-D-alanine + UMP. The protein operates within cell wall biogenesis; peptidoglycan biosynthesis. In terms of biological role, catalyzes the initial step of the lipid cycle reactions in the biosynthesis of the cell wall peptidoglycan: transfers peptidoglycan precursor phospho-MurNAc-pentapeptide from UDP-MurNAc-pentapeptide onto the lipid carrier undecaprenyl phosphate, yielding undecaprenyl-pyrophosphoryl-MurNAc-pentapeptide, known as lipid I. This Corynebacterium diphtheriae (strain ATCC 700971 / NCTC 13129 / Biotype gravis) protein is Phospho-N-acetylmuramoyl-pentapeptide-transferase.